The chain runs to 221 residues: 21 kDa seed protein (221 aa).

The signal sequence occupies residues 1–26; the sequence is MKTATAVVLLLFAFTSKSYFFGVANA. An intrachain disulfide couples Cys69 to Cys116.

Belongs to the protease inhibitor I3 (leguminous Kunitz-type inhibitor) family.

This is 21 kDa seed protein (ASP) from Theobroma cacao (Cacao).